The chain runs to 130 residues: Small ribosomal subunit protein uS11 (130 aa).

It belongs to the universal ribosomal protein uS11 family. Part of the 30S ribosomal subunit. Interacts with proteins S7 and S18. Binds to IF-3.

Functionally, located on the platform of the 30S subunit, it bridges several disparate RNA helices of the 16S rRNA. Forms part of the Shine-Dalgarno cleft in the 70S ribosome. This Campylobacter fetus subsp. fetus (strain 82-40) protein is Small ribosomal subunit protein uS11.